The chain runs to 364 residues: GDP-fucose transporter 1 (364 aa).

8 consecutive transmembrane segments (helical) span residues 34–56, 76–98, 111–130, 140–162, 167–185, 195–214, 227–249, and 264–286; these read FLLR…ISMV, VTFY…AACC, LRVA…MITF, VAFY…YLLL, SFYA…WLGV, SWLG…LNAI, IWRL…LLLL, and AHFW…VTGL.

This sequence belongs to the TPT transporter family. SLC35C subfamily.

Its subcellular location is the golgi apparatus membrane. The enzyme catalyses GMP(out) + GDP-beta-L-fucose(in) = GMP(in) + GDP-beta-L-fucose(out). Functionally, antiporter specific for GDP-l-fucose and depending on the concomitant reverse transport of GMP. Involved in GDP-fucose import from the cytoplasm into the Golgi lumen. The polypeptide is GDP-fucose transporter 1 (Homo sapiens (Human)).